The following is a 149-amino-acid chain: Arginine repressor (149 aa).

This sequence belongs to the ArgR family.

It is found in the cytoplasm. Its pathway is amino-acid biosynthesis; L-arginine biosynthesis [regulation]. In terms of biological role, regulates arginine biosynthesis genes. In Oceanobacillus iheyensis (strain DSM 14371 / CIP 107618 / JCM 11309 / KCTC 3954 / HTE831), this protein is Arginine repressor.